The primary structure comprises 285 residues: HTH-type transcriptional regulator MurR (285 aa).

Positions 1–77 constitute an HTH rpiR-type domain; sequence MLYLTKIRNA…MALIGEYSAS (77 aa). Positions 37-56 form a DNA-binding region, H-T-H motif; that stretch reads SRQMAKQLGISQSSIVKFAQ. The SIS domain occupies 128-268; that stretch reads IIEVISKAPF…FVGLVQLNDV (141 aa).

Homotetramer.

Its pathway is amino-sugar metabolism; N-acetylmuramate degradation [regulation]. In terms of biological role, represses the expression of the murPQ operon involved in the uptake and degradation of N-acetylmuramic acid (MurNAc). Binds to two adjacent inverted repeats within the operator region. MurNAc 6-phosphate, the substrate of MurQ, is the specific inducer that weakens binding of MurR to the operator. In Escherichia coli (strain ATCC 8739 / DSM 1576 / NBRC 3972 / NCIMB 8545 / WDCM 00012 / Crooks), this protein is HTH-type transcriptional regulator MurR.